The sequence spans 478 residues: Spindle defective protein 3 (478 aa).

Residues 1–24 (MDQMTVEEKILEHQELEDGSSSFR) are Cytoplasmic-facing. The helical transmembrane segment at 25 to 45 (WLVSSTVIAIGGATVALYISG) threads the bilayer. Over 46–52 (KIDWKIP) the chain is Extracellular. The chain crosses the membrane as a helical span at residues 53 to 73 (AIEAGLALTAGGTITCGYLWF). The Cytoplasmic segment spans residues 74–478 (KKRVKTVRKL…LRRVDDDIIE (405 aa)).

Its subcellular location is the mitochondrion. It localises to the mitochondrion outer membrane. In the first mitotic division in embryos, required for mitotic spindle alignment and asymmetric cell division. Required for motor-driven chromosome movement and homolog searching within the nucleus, and subsequently ensures homologous chromosome pairing during the prophase stage of meiosis. The protein is Spindle defective protein 3 of Caenorhabditis elegans.